We begin with the raw amino-acid sequence, 500 residues long: Aspartyl/glutamyl-tRNA(Asn/Gln) amidotransferase subunit B (500 aa).

The protein belongs to the GatB/GatE family. GatB subfamily. As to quaternary structure, heterotrimer of A, B and C subunits.

The catalysed reaction is L-glutamyl-tRNA(Gln) + L-glutamine + ATP + H2O = L-glutaminyl-tRNA(Gln) + L-glutamate + ADP + phosphate + H(+). It carries out the reaction L-aspartyl-tRNA(Asn) + L-glutamine + ATP + H2O = L-asparaginyl-tRNA(Asn) + L-glutamate + ADP + phosphate + 2 H(+). Functionally, allows the formation of correctly charged Asn-tRNA(Asn) or Gln-tRNA(Gln) through the transamidation of misacylated Asp-tRNA(Asn) or Glu-tRNA(Gln) in organisms which lack either or both of asparaginyl-tRNA or glutaminyl-tRNA synthetases. The reaction takes place in the presence of glutamine and ATP through an activated phospho-Asp-tRNA(Asn) or phospho-Glu-tRNA(Gln). This is Aspartyl/glutamyl-tRNA(Asn/Gln) amidotransferase subunit B from Sinorhizobium medicae (strain WSM419) (Ensifer medicae).